The following is a 257-amino-acid chain: uncharacterized protein (257 aa).

Residues 1–22 (MIHSKRLRLWLYLVLLAVFIGA) form the signal peptide. Cys23 carries N-palmitoyl cysteine lipidation. Cys23 carries the S-diacylglycerol cysteine lipid modification.

The protein belongs to the staphylococcal tandem lipoprotein family.

The protein localises to the cell membrane. This is an uncharacterized protein from Staphylococcus aureus (strain NCTC 8325 / PS 47).